The following is a 524-amino-acid chain: Solute carrier family 35 member F5 (524 aa).

Residues 1–22 form a disordered region; that stretch reads MVPPRHHPGAGRPGALSSSPPF. The segment covering 13 to 22 has biased composition (low complexity); sequence PGALSSSPPF. A run of 2 helical transmembrane segments spans residues 69-89 and 101-121; these read MALGIVILLLVDVIWVASSEL and FFSTFAKTSMFVLYLLGFIVW. Position 207 is a phosphoserine (S207). Helical transmembrane passes span 244–264, 269–289, 297–317, 328–348, 362–382, 396–416, 421–441, and 453–473; these read ISFFFCFVWFLANFSYQEALS, AIVNILSSTSGLFTLILAAMF, FTLSKLLAVILSIGGVVLVNL, TIGSIWSLVGAMLYAVYIVMI, MFFGFVGLFNLLLLWPGFFLL, VVLMCIVINGLIGTVLSEFLW, FLTSSLIGTLALSLTIPLSII, and WLFFAGAIPVFFSFFIATLLC. One can recognise an EamA domain in the interval 253 to 317; the sequence is FLANFSYQEA…SIGGVVLVNL (65 aa).

The protein belongs to the SLC35F solute transporter family.

The protein localises to the membrane. Its function is as follows. Putative solute transporter. This is Solute carrier family 35 member F5 (SLC35F5) from Bos taurus (Bovine).